The sequence spans 355 residues: 3-dehydroquinate synthase (355 aa).

Residues 71–76, 105–109, 129–130, lysine 142, and lysine 151 contribute to the NAD(+) site; these read EGEERK, GVVGD, and TS. Zn(2+) contacts are provided by glutamate 184, histidine 246, and histidine 263.

The protein belongs to the sugar phosphate cyclases superfamily. Dehydroquinate synthase family. Co(2+) is required as a cofactor. Requires Zn(2+) as cofactor. The cofactor is NAD(+).

The protein resides in the cytoplasm. The enzyme catalyses 7-phospho-2-dehydro-3-deoxy-D-arabino-heptonate = 3-dehydroquinate + phosphate. It functions in the pathway metabolic intermediate biosynthesis; chorismate biosynthesis; chorismate from D-erythrose 4-phosphate and phosphoenolpyruvate: step 2/7. Its function is as follows. Catalyzes the conversion of 3-deoxy-D-arabino-heptulosonate 7-phosphate (DAHP) to dehydroquinate (DHQ). The polypeptide is 3-dehydroquinate synthase (Streptococcus pneumoniae (strain JJA)).